A 252-amino-acid chain; its full sequence is MANLGCWMLVLFVATWSDLGLCKKRPKPGGWNTGGSRYPGQGSPGGNLYPPQGGGWGQPHGGGWGQPHGGGWGQPHGGSWGQPHGGGWGQGGGTHNQWNKPSKPKTSMKHVAGAAAAGAVVGGLGGYMLGSAMSRPLIHFGNDYEDRYYRENMYRYPNQVYYRPVDQYSNQNNFVHDCVNITIKQHTVTTTTKGENFTETDVKMMERVVEQMCITQYERESQAYYQRGSSMVLFSSPPVILLISFLIFLIVG.

Residues 1–22 form the signal peptide; it reads MANLGCWMLVLFVATWSDLGLC. The interval 23 to 38 is interaction with ADGRG6; that stretch reads KKRPKPGGWNTGGSRY. An interaction with GRB2, ERI3 and SYN1 region spans residues 23-229; that stretch reads KKRPKPGGWN…ESQAYYQRGS (207 aa). The segment at 26-106 is disordered; the sequence is PKPGGWNTGG…QWNKPSKPKT (81 aa). Tandem repeats lie at residues 51-58, 59-66, 67-74, 75-82, and 83-90. Residues 51–90 are 5 X 8 AA tandem repeats of P-H-G-G-G-W-G-Q; sequence PQGGGWGQPHGGGWGQPHGGGWGQPHGGSWGQPHGGGWGQ. The span at 52 to 94 shows a compositional bias: gly residues; that stretch reads QGGGWGQPHGGGWGQPHGGGWGQPHGGSWGQPHGGGWGQGGGT. 12 residues coordinate Cu(2+): His60, Gly61, Gly62, His68, Gly69, Gly70, His76, Gly77, Gly78, His84, Gly85, and Gly86. A disulfide bridge connects residues Cys178 and Cys213. 2 N-linked (GlcNAc...) asparagine glycosylation sites follow: Asn180 and Asn196. Residue Ser229 is the site of GPI-anchor amidated serine attachment. The propeptide at 230–252 is removed in mature form; sequence SMVLFSSPPVILLISFLIFLIVG.

Belongs to the prion family. In terms of assembly, monomer and homodimer. Has a tendency to aggregate into amyloid fibrils containing a cross-beta spine, formed by a steric zipper of superposed beta-strands. Soluble oligomers may represent an intermediate stage on the path to fibril formation. Copper binding may promote oligomerization. Interacts with GRB2, APP, ERI3/PRNPIP and SYN1. Mislocalized cytosolically exposed PrP interacts with MGRN1; this interaction alters MGRN1 subcellular location and causes lysosomal enlargement. Interacts with APP. Interacts with KIAA1191. Interacts with ADGRG6.

The protein localises to the cell membrane. It is found in the golgi apparatus. Functionally, its primary physiological function is unclear. May play a role in neuronal development and synaptic plasticity. May be required for neuronal myelin sheath maintenance. May promote myelin homeostasis through acting as an agonist for ADGRG6 receptor. May play a role in iron uptake and iron homeostasis. Soluble oligomers are toxic to cultured neuroblastoma cells and induce apoptosis (in vitro). Association with GPC1 (via its heparan sulfate chains) targets PRNP to lipid rafts. Also provides Cu(2+) or Zn(2+) for the ascorbate-mediated GPC1 deaminase degradation of its heparan sulfate side chains. In Sapajus apella (Brown-capped capuchin), this protein is Major prion protein (PRNP).